The sequence spans 516 residues: Ribonuclease Y (516 aa).

A helical transmembrane segment spans residues 1–21; it reads MLIKIVIACVITAIIVALIAW. Residues 206 to 269 enclose the KH domain; that stretch reads TISVVQLPND…ETARIALEKL (64 aa). The HD domain occupies 332 to 425; it reads ALKHSIEVAI…VQAADTISAA (94 aa).

This sequence belongs to the RNase Y family.

The protein localises to the cell membrane. Its function is as follows. Endoribonuclease that initiates mRNA decay. This chain is Ribonuclease Y, found in Lachnoclostridium phytofermentans (strain ATCC 700394 / DSM 18823 / ISDg) (Clostridium phytofermentans).